An 823-amino-acid chain; its full sequence is Semaphorin-4B (823 aa).

The first 30 residues, Met-1–Ala-30, serve as a signal peptide directing secretion. The Extracellular segment spans residues Leu-31–Glu-703. The Sema domain maps to Arg-34–Val-510. N-linked (GlcNAc...) asparagine glycans are attached at residues Asn-53, Asn-56, and Asn-83. Cys-107 and Cys-118 are disulfide-bonded. Asn-129 carries an N-linked (GlcNAc...) asparagine glycan. Cystine bridges form between Cys-136–Cys-145, Cys-273–Cys-386, and Cys-297–Cys-346. N-linked (GlcNAc...) asparagine glycans are attached at residues Asn-397 and Asn-512. The 71-residue stretch at Asn-512–Lys-582 folds into the PSI domain. A disulfide bridge links Cys-513 with Cys-530. Residues Asn-567, Asn-615, and Asn-680 are each glycosylated (N-linked (GlcNAc...) asparagine). The Ig-like C2-type domain occupies Asn-589–Phe-649. An intrachain disulfide couples Cys-596 to Cys-642. The helical transmembrane segment at Phe-704–Tyr-724 threads the bilayer. The Cytoplasmic portion of the chain corresponds to Arg-725 to Val-823. Phosphoserine occurs at positions 779, 780, 804, and 816.

It belongs to the semaphorin family. Interacts with GIPC PDZ domain.

The protein resides in the membrane. Its function is as follows. Inhibits axonal extension by providing local signals to specify territories inaccessible for growing axons. The sequence is that of Semaphorin-4B from Mus musculus (Mouse).